The sequence spans 120 residues: KRFTRCGLVNELRKQGFDENLMRDWVCLVENESARYTDKIANVNKNGSRDYGLFQINDKYWCSKGSTPGKDCNVTCSQLLTDDITVASTCAKKIYKRTKFDAWSGWDNHCNHSNPDISSC.

The region spanning 1-120 (KRFTRCGLVN…NHSNPDISSC (120 aa)) is the C-type lysozyme domain. 4 disulfide bridges follow: cysteine 6–cysteine 120, cysteine 27–cysteine 110, cysteine 62–cysteine 76, and cysteine 72–cysteine 90. Residues glutamate 32 and aspartate 50 contribute to the active site.

It belongs to the glycosyl hydrolase 22 family. In terms of assembly, monomer.

It catalyses the reaction Hydrolysis of (1-&gt;4)-beta-linkages between N-acetylmuramic acid and N-acetyl-D-glucosamine residues in a peptidoglycan and between N-acetyl-D-glucosamine residues in chitodextrins.. In terms of biological role, lysozymes have primarily a bacteriolytic function; those in tissues and body fluids are associated with the monocyte-macrophage system and enhance the activity of immunoagents. The sequence is that of Lysozyme from Antheraea mylitta (Tasar silkworm).